The sequence spans 135 residues: uncharacterized protein (135 aa).

It belongs to the asp23 family.

This is an uncharacterized protein from Bacillus subtilis (strain 168).